A 100-amino-acid chain; its full sequence is UPF0213 protein YhbQ (100 aa).

The GIY-YIG domain occupies 2–77 (TPWFLYLIRT…KQLTKRQKER (76 aa)).

This sequence belongs to the UPF0213 family.

This chain is UPF0213 protein YhbQ, found in Escherichia coli O157:H7.